Reading from the N-terminus, the 308-residue chain is tRNA pseudouridine synthase B (308 aa).

The active-site Nucleophile is the Asp-37.

Belongs to the pseudouridine synthase TruB family. Type 1 subfamily.

It catalyses the reaction uridine(55) in tRNA = pseudouridine(55) in tRNA. Its function is as follows. Responsible for synthesis of pseudouridine from uracil-55 in the psi GC loop of transfer RNAs. The polypeptide is tRNA pseudouridine synthase B (Deinococcus radiodurans (strain ATCC 13939 / DSM 20539 / JCM 16871 / CCUG 27074 / LMG 4051 / NBRC 15346 / NCIMB 9279 / VKM B-1422 / R1)).